The following is a 458-amino-acid chain: Flap endonuclease 1 (458 aa).

The interval 1 to 105 is N-domain; sequence MGIKGLTGLL…GVLSKRFEKR (105 aa). Aspartate 34 serves as a coordination point for Mg(2+). 2 residues coordinate DNA: arginine 47 and arginine 71. Mg(2+)-binding residues include aspartate 87, glutamate 159, glutamate 161, aspartate 180, and aspartate 182. The interval 123 to 254 is I-domain; it reads DVDRFSRRTV…KSALKLIREF (132 aa). Glutamate 159 is a DNA binding site. DNA-binding residues include glycine 232 and aspartate 234. Aspartate 234 provides a ligand contact to Mg(2+). Disordered stretches follow at residues 268 to 347 and 416 to 458; these read AAAR…IPDE and GFFT…AKKK. Composition is skewed to acidic residues over residues 275–285 and 293–309; these read AEEEDEEEAEE and EMPD…DEEE. Basic and acidic residues predominate over residues 310–329; sequence AERRKKAEAAKKKKAQEKAK. The interaction with PCNA stretch occupies residues 410–418; that stretch reads QQGRLDGFF. Over residues 442 to 452 the composition is skewed to basic and acidic residues; it reads RKGEDKAEGSG.

Belongs to the XPG/RAD2 endonuclease family. FEN1 subfamily. In terms of assembly, interacts with PCNA. Three molecules of FEN1 bind to one PCNA trimer with each molecule binding to one PCNA monomer. PCNA stimulates the nuclease activity without altering cleavage specificity. Mg(2+) is required as a cofactor. Post-translationally, phosphorylated. Phosphorylation upon DNA damage induces relocalization to the nuclear plasma.

The protein resides in the nucleus. It is found in the nucleolus. Its subcellular location is the nucleoplasm. The protein localises to the mitochondrion. Structure-specific nuclease with 5'-flap endonuclease and 5'-3' exonuclease activities involved in DNA replication and repair. During DNA replication, cleaves the 5'-overhanging flap structure that is generated by displacement synthesis when DNA polymerase encounters the 5'-end of a downstream Okazaki fragment. It enters the flap from the 5'-end and then tracks to cleave the flap base, leaving a nick for ligation. Also involved in the long patch base excision repair (LP-BER) pathway, by cleaving within the apurinic/apyrimidinic (AP) site-terminated flap. Acts as a genome stabilization factor that prevents flaps from equilibrating into structures that lead to duplications and deletions. Also possesses 5'-3' exonuclease activity on nicked or gapped double-stranded DNA, and exhibits RNase H activity. Also involved in replication and repair of rDNA and in repairing mitochondrial DNA. This chain is Flap endonuclease 1, found in Coprinopsis cinerea (strain Okayama-7 / 130 / ATCC MYA-4618 / FGSC 9003) (Inky cap fungus).